We begin with the raw amino-acid sequence, 186 residues long: Elongation factor P (186 aa).

Belongs to the elongation factor P family.

The protein localises to the cytoplasm. It participates in protein biosynthesis; polypeptide chain elongation. In terms of biological role, involved in peptide bond synthesis. Stimulates efficient translation and peptide-bond synthesis on native or reconstituted 70S ribosomes in vitro. Probably functions indirectly by altering the affinity of the ribosome for aminoacyl-tRNA, thus increasing their reactivity as acceptors for peptidyl transferase. This is Elongation factor P from Crocosphaera subtropica (strain ATCC 51142 / BH68) (Cyanothece sp. (strain ATCC 51142)).